Consider the following 194-residue polypeptide: Crossover junction endodeoxyribonuclease RuvC (194 aa).

Residues Asp7, Glu68, and Asp141 contribute to the active site. Mg(2+) is bound by residues Asp7, Glu68, and Asp141. The tract at residues 162-194 (GGEREQHLTAAQRQWAEAAQNSTRRRKNSDRGM) is disordered. The segment covering 184 to 194 (TRRRKNSDRGM) has biased composition (basic residues).

The protein belongs to the RuvC family. As to quaternary structure, homodimer which binds Holliday junction (HJ) DNA. The HJ becomes 2-fold symmetrical on binding to RuvC with unstacked arms; it has a different conformation from HJ DNA in complex with RuvA. In the full resolvosome a probable DNA-RuvA(4)-RuvB(12)-RuvC(2) complex forms which resolves the HJ. The cofactor is Mg(2+).

It is found in the cytoplasm. It catalyses the reaction Endonucleolytic cleavage at a junction such as a reciprocal single-stranded crossover between two homologous DNA duplexes (Holliday junction).. Its function is as follows. The RuvA-RuvB-RuvC complex processes Holliday junction (HJ) DNA during genetic recombination and DNA repair. Endonuclease that resolves HJ intermediates. Cleaves cruciform DNA by making single-stranded nicks across the HJ at symmetrical positions within the homologous arms, yielding a 5'-phosphate and a 3'-hydroxyl group; requires a central core of homology in the junction. The consensus cleavage sequence is 5'-(A/T)TT(C/G)-3'. Cleavage occurs on the 3'-side of the TT dinucleotide at the point of strand exchange. HJ branch migration catalyzed by RuvA-RuvB allows RuvC to scan DNA until it finds its consensus sequence, where it cleaves and resolves the cruciform DNA. In Bifidobacterium longum subsp. infantis (strain ATCC 15697 / DSM 20088 / JCM 1222 / NCTC 11817 / S12), this protein is Crossover junction endodeoxyribonuclease RuvC.